A 533-amino-acid chain; its full sequence is DNA-directed RNA polymerase III subunit RPC3 (533 aa).

The segment at 162–181 (LVPDTDSSDRGPPPPAPTLV) is disordered. Position 194 is a phosphoserine (S194). The disordered stretch occupies residues 197–228 (GKGKRRRSSDEDATGEPKAKKPRYTDNKEPSP). The segment covering 211-227 (GEPKAKKPRYTDNKEPS) has biased composition (basic and acidic residues).

This sequence belongs to the eukaryotic RPC3/POLR3C RNA polymerase subunit family. Component of the RNA polymerase III complex consisting of 17 subunits: a ten-subunit horseshoe-shaped catalytic core composed of POLR3A/RPC1, POLR3B/RPC2, POLR1C/RPAC1, POLR1D/RPAC2, POLR3K/RPC10, POLR2E/RPABC1, POLR2F/RPABC2, POLR2H/RPABC3, POLR2K/RPABC4 and POLR2L/RPABC5; a mobile stalk composed of two subunits POLR3H/RPC8 and CRCP/RPC9, protruding from the core and functioning primarily in transcription initiation; and additional subunits homologous to general transcription factors of the RNA polymerase II machinery, POLR3C/RPC3-POLR3F/RPC6-POLR3G/RPC7 heterotrimer required for transcription initiation and POLR3D/RPC4-POLR3E/RPC5 heterodimer involved in both transcription initiation and termination. Directly interacts with POLR3G/RPC7 and POLR3GL. Directly interacts with POLR3F/RPC6. Interacts with GTF3C4. As part of the RNA polymerase III complex, interacts with PKP2.

It localises to the nucleus. Its function is as follows. DNA-dependent RNA polymerase catalyzes the transcription of DNA into RNA using the four ribonucleoside triphosphates as substrates. Specific peripheric component of RNA polymerase III (Pol III) which synthesizes small non-coding RNAs including 5S rRNA, snRNAs, tRNAs and miRNAs from at least 500 distinct genomic loci. Part of POLR3C/RPC3-POLR3F/RPC6-POLR3G/RPC7 heterotrimer, coordinates the dynamics of Pol III stalk and clamp modules during the transition from apo to elongation state. Pol III plays a key role in sensing and limiting infection by intracellular bacteria and DNA viruses. Acts as a nuclear and cytosolic DNA sensor involved in innate immune response. Can sense non-self dsDNA that serves as template for transcription into dsRNA. The non-self RNA polymerase III transcripts, such as Epstein-Barr virus-encoded RNAs (EBERs) induce type I interferon and NF-kappa-B through the RIG-I pathway. Preferentially binds single-stranded DNA (ssDNA) in a sequence-independent manner. This Mus musculus (Mouse) protein is DNA-directed RNA polymerase III subunit RPC3.